The primary structure comprises 1326 residues: F-box/WD repeat-containing protein 7 (1326 aa).

Disordered regions lie at residues 1 to 58, 123 to 187, 318 to 351, 399 to 549, 615 to 642, and 797 to 843; these read MERG…AEVG, DSSS…IEDE, TVSN…ALSR, GSKA…SGCS, RSNP…RNGS, and TPRS…NPPP. Polar residues predominate over residues 9 to 39; that stretch reads SSESVTSAGERTQSAVTSSTSTWVKSQASTS. A compositionally biased stretch (acidic residues) spans 165–187; the sequence is NDDDDDEEPEPEEDDEEELIEDE. Positions 320 to 348 are enriched in low complexity; sequence SNPSPAASANAAAPEEASTSNSSSTSSSA. The segment covering 403–464 has biased composition (polar residues); sequence ANGSGTANSD…KLNLGSSLGA (62 aa). Low complexity predominate over residues 465 to 486; it reads SSCSQHRSGSSSTSKSMESSTS. Residues 495–504 show a composition bias toward polar residues; it reads VYTNTNSNDY. Low complexity-rich tracts occupy residues 510–520, 528–546, and 616–631; these read TTSGSSTSGGS, NVSA…SQES, and SNPP…GANP. Composition is skewed to polar residues over residues 632–642 and 797–824; these read TASVRQRRNGS and TPRS…STPG. Thr813 carries the post-translational modification Phosphothreonine. A Phosphoserine modification is found at Ser825. The F-box domain maps to 889-935; the sequence is RDFISLLPRELALFVLSYLEPKDLLRAAQTCRSWRFLCDDNLLWKEK. WD repeat units follow at residues 992–1030, 1033–1070, 1073–1110, 1113–1150, 1153–1190, 1193–1232, and 1236–1273; these read GHDD…CLRT, GHTG…CVHT, GHTS…CLHV, GHLA…CLHT, GHTN…CKHT, GHQS…QTLS, and KHHS…FIRN.

In terms of assembly, part of a SCF E3 ubiquitin-protein ligase complex. Interacts with Myc and puf. Interacts with CycE. As to expression, expressed in follicle cell epithelium and imaginal disks, particularly in the morphogenetic furrow.

The protein resides in the nucleus. It functions in the pathway protein modification; protein ubiquitination. Its function is as follows. Substrate recognition component of a SCF (SKP1-CUL1-F-box protein) E3 ubiquitin-protein ligase complex which mediates the ubiquitination and subsequent proteasomal degradation of target proteins. Probably recognizes and binds to phosphorylated target proteins. In the wing and eye, negatively regulates cell growth and proliferation by mediating the degradation of Myc and cyclin E, respectively. Required for endocycles, but not mitosis in follicle cell epithelium. The polypeptide is F-box/WD repeat-containing protein 7 (Drosophila melanogaster (Fruit fly)).